A 217-amino-acid chain; its full sequence is 3,4-dihydroxy-2-butanone 4-phosphate synthase (217 aa).

D-ribulose 5-phosphate-binding positions include 37–38 (RE), Asp42, 150–154 (RRGHT), and Glu174. Glu38 serves as a coordination point for Mg(2+). Residue His153 coordinates Mg(2+).

Belongs to the DHBP synthase family. As to quaternary structure, homodimer. Requires Mg(2+) as cofactor. Mn(2+) serves as cofactor.

The enzyme catalyses D-ribulose 5-phosphate = (2S)-2-hydroxy-3-oxobutyl phosphate + formate + H(+). The protein operates within cofactor biosynthesis; riboflavin biosynthesis; 2-hydroxy-3-oxobutyl phosphate from D-ribulose 5-phosphate: step 1/1. In terms of biological role, catalyzes the conversion of D-ribulose 5-phosphate to formate and 3,4-dihydroxy-2-butanone 4-phosphate. This Serratia proteamaculans (strain 568) protein is 3,4-dihydroxy-2-butanone 4-phosphate synthase.